A 1202-amino-acid polypeptide reads, in one-letter code: MGSAALPHARQRWVSHALDSNRKFLIANAQMENCAIIYCNDGFCEMFGYSRVEVMQRPCTCDFLTGPDTTKSSIAQLTQALLGSEECKLEILYYRKDTSCFRCLVDVVPVKNEDGVVIMFILNFEDLAQLIAKSSGRSLHHRLSQSWRAGEGRRLKFSLPSLRRLKAQRNSLPTSEFDGVAIDYGKPGGDSLILRDLKTSPKENCVQSETESLLEKERRPSLEADPTLQHPIPKQEPPSLGPRGSYSAWGFIRSRPGGSFHSLRRVSSLDNFEAARSEFQRKFRERRANSEGGMGLSGKASHVKPNPPNSTSDSDLMKYRTISQIPQFTLNFVEFNLEKHRSGSTTEIEIIAPHKVTERTQNVTEKVTQVLSLGADVLPEYKLQAPRIHRWTILHYSPFKAVWDWLILLLVIYTAVFTPYSAAFLLNEEQGEEKHWNCSYSCDPLNIIDLIVDIMFIVDIVINFRTTYVNINDEVVSHPGKIAIHYFKGWFLIDMVAAIPFDLLIFRSGSDETTTLIGLLKTARLLRLVRVARKLDRYSEYGAAVLFLLMCTFALIAHWLACIWYAIGNVERPYMEHKIGWLDNLGDQIGKRYNDSDLSSGPSIKDKYVTALYFTFSSLTSVGFGNVSPNTNSEKIFSICVMLIGSLMYASIFGNVSAIIQRLYSGTARYHTQMLRVKEFIRFHQIPNPLRQRLEEYFQHAWSYTNGIDMNAVLKGFPDCLQADICLHLNRTLLQNCKAFRGASKGCLRALAMKFKTTHAPPGDTLVHYGDVLTTLYFISRGSIEILKEDIVVAILGKNDIFGEPISLYARPGKSNADVRALTYCDLHKIQREDLLEVLDMYPAFSDNFWSNLEITFNLRDADSVPRTPLSEEYDCTYRRVRRRKHSLCQPNKPDPDTGTSDAEQYHTYSELTNPQDPLSKDQWDDVGSSTTPCSQTSDDEAKPGSPTKALSLVTASASGTEVSKQAAESSQSYAGTHICTTPLDIPNMFTFWEDQRPNHHPEPLQHVSLVHSSRDIPLHSDYRPGQIESRLELLQAQLSRLESRMSSDINIILQLLQRQLSQVPPAYSPISPSSHNLAMYGIVPRSLEPLTPCAPLEDEQQTAPGQSPSYAEVEKFHLKSRHSLSSGMHLTVASDETMTVYSEQEHHSPPLLNPEPPHQRAPNTQGLLRGSRFPSLPEHLEASSEHQDIQRHLSDPVLPGS.

The Cytoplasmic portion of the chain corresponds to 1 to 405; that stretch reads MGSAALPHAR…YSPFKAVWDW (405 aa). Residues 36 to 84 form the PAS domain; sequence IIYCNDGFCEMFGYSRVEVMQRPCTCDFLTGPDTTKSSIAQLTQALLGS. The region spanning 87–139 is the PAC domain; the sequence is CKLEILYYRKDTSCFRCLVDVVPVKNEDGVVIMFILNFEDLAQLIAKSSGRSL. Disordered stretches follow at residues 203–243 and 285–315; these read ENCV…LGPR and ERRA…SDSD. Basic and acidic residues predominate over residues 213 to 222; that stretch reads LLEKERRPSL. The helical transmembrane segment at 406-426 threads the bilayer; the sequence is LILLLVIYTAVFTPYSAAFLL. Topologically, residues 427–443 are extracellular; the sequence is NEEQGEEKHWNCSYSCD. Asn437 carries an N-linked (GlcNAc...) asparagine glycan. A helical transmembrane segment spans residues 444–464; sequence PLNIIDLIVDIMFIVDIVINF. At 465–485 the chain is on the cytoplasmic side; it reads RTTYVNINDEVVSHPGKIAIH. Residues 486-506 form a helical membrane-spanning segment; the sequence is YFKGWFLIDMVAAIPFDLLIF. Topologically, residues 507-515 are extracellular; sequence RSGSDETTT. A helical; Voltage-sensor transmembrane segment spans residues 516–536; the sequence is LIGLLKTARLLRLVRVARKLD. Topologically, residues 537-543 are cytoplasmic; the sequence is RYSEYGA. Residues 544-564 form a helical membrane-spanning segment; sequence AVLFLLMCTFALIAHWLACIW. Residues 565–608 lie on the Extracellular side of the membrane; sequence YAIGNVERPYMEHKIGWLDNLGDQIGKRYNDSDLSSGPSIKDKY. Asn594 is a glycosylation site (N-linked (GlcNAc...) asparagine). Residues 609–629 constitute an intramembrane region (pore-forming); that stretch reads VTALYFTFSSLTSVGFGNVSP. Residues 621–626 carry the Selectivity filter motif; that stretch reads SVGFGN. The Extracellular segment spans residues 630–635; that stretch reads NTNSEK. The helical transmembrane segment at 636–656 threads the bilayer; that stretch reads IFSICVMLIGSLMYASIFGNV. The Cytoplasmic portion of the chain corresponds to 657–1202; sequence SAIIQRLYSG…HLSDPVLPGS (546 aa). Residues 739 to 839 are cNMP-binding domain; it reads AFRGASKGCL…IQREDLLEVL (101 aa). 3 disordered regions span residues 912–948, 1092–1112, and 1140–1202; these read LTNP…GSPT, TPCA…PSYA, and TVYS…LPGS. The span at 928 to 937 shows a compositional bias: polar residues; sequence GSSTTPCSQT. The segment covering 1179–1195 has biased composition (basic and acidic residues); it reads EHLEASSEHQDIQRHLS.

This sequence belongs to the potassium channel family. H (Eag) (TC 1.A.1.20) subfamily. Kv11.2/KCNH6 sub-subfamily. As to quaternary structure, the potassium channel is probably composed of a homo- or heterotetrameric complex of pore-forming alpha subunits that can associate only within their subfamily.

It is found in the cell membrane. The catalysed reaction is K(+)(in) = K(+)(out). Functionally, pore-forming (alpha) subunit of voltage-gated inwardly rectifying potassium channel. Characterized by unusual gating kinetics by producing relatively small outward currents during membrane depolarization and large inward currents during subsequent repolarization which reflect a rapid inactivation during depolarization and quick recovery from inactivation but slow deactivation (closing) during repolarization. Activates even more slowly than KCNH2. This is Voltage-gated inwardly rectifying potassium channel KCNH6 from Gallus gallus (Chicken).